The primary structure comprises 334 residues: Ferric enterobactin transport system permease protein FepD (334 aa).

Topologically, residues methionine 1–arginine 9 are periplasmic. A helical transmembrane segment spans residues alanine 10–isoleucine 30. Residues glycine 31–arginine 63 are Cytoplasmic-facing. A helical transmembrane segment spans residues threonine 64–leucine 84. Residues threonine 85–proline 92 lie on the Periplasmic side of the membrane. Residues glycine 93–glycine 113 traverse the membrane as a helical segment. The Cytoplasmic segment spans residues tyrosine 114 to glutamine 120. The chain crosses the membrane as a helical span at residues leucine 121 to glutamine 141. The Periplasmic segment spans residues glycine 142 to leucine 151. Residues threonine 152–leucine 172 form a helical membrane-spanning segment. Over asparagine 173–asparagine 192 the chain is Cytoplasmic. A helical transmembrane segment spans residues leucine 193 to leucine 213. Residues serine 214–glycine 241 are Periplasmic-facing. The helical transmembrane segment at leucine 242–isoleucine 262 threads the bilayer. Residues glycine 263 to arginine 279 are Cytoplasmic-facing. Residues tryptophan 280–glycine 300 traverse the membrane as a helical segment. Topologically, residues arginine 301–proline 305 are periplasmic. A helical membrane pass occupies residues glycine 306–valine 326. Topologically, residues arginine 327–alanine 334 are cytoplasmic.

It belongs to the binding-protein-dependent transport system permease family. FecCD subfamily. In terms of assembly, the complex is composed of two ATP-binding proteins (FepC), two transmembrane proteins (FepD and FepG) and a solute-binding protein (FepB).

The protein localises to the cell inner membrane. Its function is as follows. Part of the ABC transporter complex FepBDGC involved in ferric enterobactin uptake. Responsible for the translocation of the substrate across the membrane. The protein is Ferric enterobactin transport system permease protein FepD (fepD) of Escherichia coli (strain K12).